A 237-amino-acid chain; its full sequence is Lipoprotein-releasing system ATP-binding protein LolD (237 aa).

In terms of domain architecture, ABC transporter spans 16 to 237 (LKCEGLTRIY…LDQGRLSEDA (222 aa)). 52–59 (GSSGSGKT) serves as a coordination point for ATP.

The protein belongs to the ABC transporter superfamily. Lipoprotein translocase (TC 3.A.1.125) family. The complex is composed of two ATP-binding proteins (LolD) and two transmembrane proteins (LolC and LolE).

It localises to the cell inner membrane. Its function is as follows. Part of the ABC transporter complex LolCDE involved in the translocation of mature outer membrane-directed lipoproteins, from the inner membrane to the periplasmic chaperone, LolA. Responsible for the formation of the LolA-lipoprotein complex in an ATP-dependent manner. In Chromohalobacter salexigens (strain ATCC BAA-138 / DSM 3043 / CIP 106854 / NCIMB 13768 / 1H11), this protein is Lipoprotein-releasing system ATP-binding protein LolD.